The primary structure comprises 603 residues: Probable methyltransferase-like protein 25 (603 aa).

Positions 326–352 (TSSQQIPNRETSEANKERRKMTSKSSE) are disordered.

Its function is as follows. Probable methyltransferase. The protein is Probable methyltransferase-like protein 25 (METTL25) of Homo sapiens (Human).